A 113-amino-acid chain; its full sequence is Molt-inhibiting hormone (113 aa).

An N-terminal signal peptide occupies residues 1 to 35 (MMSRTESRYSSQRTWLLSMVVLAALWSISVQRATA). Disulfide bonds link Cys42–Cys79, Cys59–Cys75, and Cys62–Cys88.

The protein belongs to the arthropod CHH/MIH/GIH/VIH hormone family.

Its subcellular location is the secreted. Inhibits Y-organs where molting hormone (ecdysteroid) is secreted. A molting cycle is initiated when MIH secretion diminishes or stops. This is Molt-inhibiting hormone from Metacarcinus magister (Dungeness crab).